The primary structure comprises 249 residues: Histone H1 (249 aa).

Low complexity-rich tracts occupy residues 1-19 (MSDS…QTAS) and 27-43 (KKPA…TTAP). 2 disordered regions span residues 1–53 (MSDS…QQMV) and 105–249 (QTKG…ATKK). The H15 domain maps to 45 to 119 (THPPTQQMVD…GASGSFKLSA (75 aa)). Residues 121–134 (SKKEPKPKVSSVEK) show a composition bias toward basic and acidic residues. A compositionally biased stretch (basic residues) spans 146–158 (AKKKTISATKKPK). Positions 173 to 190 (KSVDKKKAEKAKAKDAKK) are enriched in basic and acidic residues. Residues 195–233 (KAKPTTAKAKSSAAKPKTPKPKTTSAKPKKVVAAASPKK) show a composition bias toward low complexity. The segment covering 234 to 249 (AAAKKPKAKTASATKK) has biased composition (basic residues).

This sequence belongs to the histone H1/H5 family.

It is found in the nucleus. The protein localises to the chromosome. Its function is as follows. Histones H1 are necessary for the condensation of nucleosome chains into higher-order structures. This is Histone H1 (His1) from Drosophila hydei (Fruit fly).